A 361-amino-acid polypeptide reads, in one-letter code: Phosphoserine aminotransferase (361 aa).

The L-glutamate site is built by S9 and R42. Residues 76–77 (AR), W102, T153, D173, and Q196 contribute to the pyridoxal 5'-phosphate site. An N6-(pyridoxal phosphate)lysine modification is found at K197. 238–239 (NT) is a pyridoxal 5'-phosphate binding site.

The protein belongs to the class-V pyridoxal-phosphate-dependent aminotransferase family. SerC subfamily. Homodimer. Pyridoxal 5'-phosphate is required as a cofactor.

The protein localises to the cytoplasm. It carries out the reaction O-phospho-L-serine + 2-oxoglutarate = 3-phosphooxypyruvate + L-glutamate. The catalysed reaction is 4-(phosphooxy)-L-threonine + 2-oxoglutarate = (R)-3-hydroxy-2-oxo-4-phosphooxybutanoate + L-glutamate. The protein operates within amino-acid biosynthesis; L-serine biosynthesis; L-serine from 3-phospho-D-glycerate: step 2/3. It participates in cofactor biosynthesis; pyridoxine 5'-phosphate biosynthesis; pyridoxine 5'-phosphate from D-erythrose 4-phosphate: step 3/5. Catalyzes the reversible conversion of 3-phosphohydroxypyruvate to phosphoserine and of 3-hydroxy-2-oxo-4-phosphonooxybutanoate to phosphohydroxythreonine. This is Phosphoserine aminotransferase from Sodalis glossinidius (strain morsitans).